Reading from the N-terminus, the 484-residue chain is Calcium uniporter protein, mitochondrial (484 aa).

The N-terminal 33 residues, methionine 1–alanine 33, are a transit peptide targeting the mitochondrion. The Mitochondrial matrix portion of the chain corresponds to serine 34–histidine 304. Disordered stretches follow at residues alanine 59–leucine 104 and tyrosine 188–tryptophan 227. A compositionally biased stretch (basic and acidic residues) spans tyrosine 61 to serine 82. Positions serine 83–aspartate 93 are enriched in polar residues. The chain crosses the membrane as a helical span at residues alanine 305–phenylalanine 326. The Mitochondrial intermembrane segment spans residues histidine 327–leucine 334. The Selectivity filter motif lies at tryptophan 332–tyrosine 340. The helical transmembrane segment at valine 335–leucine 355 threads the bilayer. Glutamate 336 lines the Ca(2+) pocket. The Mitochondrial matrix segment spans residues phenylalanine 356–aspartate 484. 2 stretches are compositionally biased toward basic and acidic residues: residues lysine 426 to glycine 435 and aspartate 452 to histidine 462. The segment at lysine 426–aspartate 484 is disordered.

This sequence belongs to the MCU (TC 1.A.77) family. As to quaternary structure, homotetramer, assembles in a dimer or dimers configuration with two interfaces.

It is found in the mitochondrion inner membrane. The enzyme catalyses Ca(2+)(in) = Ca(2+)(out). Inhibited by ruthenium red or its derivative Ru360. In terms of biological role, highly selective calcium channel localized to the inner mitochondrial membrane, which mediates calcium uptake into the mitochondrial matrix. Mitochondrial calcium homeostasis plays key roles in cellular physiology and regulates ATP production, cytoplasmic calcium signals and activation of cell death pathways. Sufficient to operate as a pore-forming channel without the need of calcium-sensor or auxiliary subunit. This Metarhizium acridum (strain CQMa 102) protein is Calcium uniporter protein, mitochondrial.